The following is a 141-amino-acid chain: Regulator of ribonuclease activity B (141 aa).

The segment at 112–141 (GTYFEDPNAPDDEDDNDDLFPPEEDEPRLH) is disordered. The span at 119–141 (NAPDDEDDNDDLFPPEEDEPRLH) shows a compositional bias: acidic residues.

Belongs to the RraB family. In terms of assembly, interacts with the C-terminal region of Rne.

It localises to the cytoplasm. In terms of biological role, globally modulates RNA abundance by binding to RNase E (Rne) and regulating its endonucleolytic activity. Can modulate Rne action in a substrate-dependent manner by altering the composition of the degradosome. The sequence is that of Regulator of ribonuclease activity B from Xenorhabdus nematophila (strain ATCC 19061 / DSM 3370 / CCUG 14189 / LMG 1036 / NCIMB 9965 / AN6).